Consider the following 200-residue polypeptide: Dephospho-CoA kinase (200 aa).

The DPCK domain maps to 4–200 (TIGLTGSVAT…TFIKRFVKNK (197 aa)). Residue 12 to 17 (ATGKST) coordinates ATP.

It belongs to the CoaE family.

It is found in the cytoplasm. The catalysed reaction is 3'-dephospho-CoA + ATP = ADP + CoA + H(+). It participates in cofactor biosynthesis; coenzyme A biosynthesis; CoA from (R)-pantothenate: step 5/5. Its function is as follows. Catalyzes the phosphorylation of the 3'-hydroxyl group of dephosphocoenzyme A to form coenzyme A. This Listeria monocytogenes serotype 4b (strain F2365) protein is Dephospho-CoA kinase.